Here is a 350-residue protein sequence, read N- to C-terminus: Sulfate-binding protein (350 aa).

An N-terminal signal peptide occupies residues 1–40 (MKTAWTRRSFLQSAALATATVITIAACGGNNQSSSGGSGQ).

It belongs to the prokaryotic sulfate-binding protein family.

Its subcellular location is the periplasm. In terms of biological role, this protein specifically binds sulfate and is involved in its transmembrane transport. The sequence is that of Sulfate-binding protein (sbpA) from Synechococcus elongatus (strain ATCC 33912 / PCC 7942 / FACHB-805) (Anacystis nidulans R2).